The primary structure comprises 204 residues: Cytochrome c biogenesis ATP-binding export protein CcmA (204 aa).

An ABC transporter domain is found at 3–204 (LTVTDLAIAR…PLDDPDGDFL (202 aa)). ATP is bound at residue 35-42 (GPNGAGKT).

This sequence belongs to the ABC transporter superfamily. CcmA exporter (TC 3.A.1.107) family. In terms of assembly, the complex is composed of two ATP-binding proteins (CcmA) and two transmembrane proteins (CcmB).

It localises to the cell membrane. It carries out the reaction heme b(in) + ATP + H2O = heme b(out) + ADP + phosphate + H(+). Part of the ABC transporter complex CcmAB involved in the biogenesis of c-type cytochromes; once thought to export heme, this seems not to be the case, but its exact role is uncertain. Responsible for energy coupling to the transport system. In Ruegeria pomeroyi (strain ATCC 700808 / DSM 15171 / DSS-3) (Silicibacter pomeroyi), this protein is Cytochrome c biogenesis ATP-binding export protein CcmA.